Here is a 396-residue protein sequence, read N- to C-terminus: tRNA(Met) cytidine acetate ligase (396 aa).

ATP-binding positions include 9–22 (IVEY…HLHH), glycine 103, asparagine 154, and arginine 179.

The protein belongs to the TmcAL family.

It localises to the cytoplasm. The catalysed reaction is cytidine(34) in elongator tRNA(Met) + acetate + ATP = N(4)-acetylcytidine(34) in elongator tRNA(Met) + AMP + diphosphate. Functionally, catalyzes the formation of N(4)-acetylcytidine (ac(4)C) at the wobble position of elongator tRNA(Met), using acetate and ATP as substrates. First activates an acetate ion to form acetyladenylate (Ac-AMP) and then transfers the acetyl group to tRNA to form ac(4)C34. The polypeptide is tRNA(Met) cytidine acetate ligase (Fusobacterium nucleatum subsp. nucleatum (strain ATCC 25586 / DSM 15643 / BCRC 10681 / CIP 101130 / JCM 8532 / KCTC 2640 / LMG 13131 / VPI 4355)).